Reading from the N-terminus, the 657-residue chain is tRNA 5-methylaminomethyl-2-thiouridine biosynthesis bifunctional protein MnmC (657 aa).

Positions 1-235 (MSDAHNAQLD…KREMLAGPFQ (235 aa)) are tRNA (mnm(5)s(2)U34)-methyltransferase. The tract at residues 261–657 (IGAGLAGCAT…QLIRGTGSPT (397 aa)) is FAD-dependent cmnm(5)s(2)U34 oxidoreductase.

This sequence in the N-terminal section; belongs to the methyltransferase superfamily. tRNA (mnm(5)s(2)U34)-methyltransferase family. In the C-terminal section; belongs to the DAO family. It depends on FAD as a cofactor.

It is found in the cytoplasm. It catalyses the reaction 5-aminomethyl-2-thiouridine(34) in tRNA + S-adenosyl-L-methionine = 5-methylaminomethyl-2-thiouridine(34) in tRNA + S-adenosyl-L-homocysteine + H(+). In terms of biological role, catalyzes the last two steps in the biosynthesis of 5-methylaminomethyl-2-thiouridine (mnm(5)s(2)U) at the wobble position (U34) in tRNA. Catalyzes the FAD-dependent demodification of cmnm(5)s(2)U34 to nm(5)s(2)U34, followed by the transfer of a methyl group from S-adenosyl-L-methionine to nm(5)s(2)U34, to form mnm(5)s(2)U34. The chain is tRNA 5-methylaminomethyl-2-thiouridine biosynthesis bifunctional protein MnmC from Ectopseudomonas mendocina (strain ymp) (Pseudomonas mendocina).